An 82-amino-acid polypeptide reads, in one-letter code: Small ribosomal subunit protein bS16 (82 aa).

This sequence belongs to the bacterial ribosomal protein bS16 family.

In Rippkaea orientalis (strain PCC 8801 / RF-1) (Cyanothece sp. (strain PCC 8801)), this protein is Small ribosomal subunit protein bS16.